The chain runs to 154 residues: Nucleoside diphosphate kinase A1 (154 aa).

Positions 13, 61, 89, 95, 106, and 116 each coordinate ATP. The active-site Pros-phosphohistidine intermediate is H119.

The protein belongs to the NDK family. The cofactor is Mg(2+).

It localises to the cytoplasm. The catalysed reaction is a 2'-deoxyribonucleoside 5'-diphosphate + ATP = a 2'-deoxyribonucleoside 5'-triphosphate + ADP. It catalyses the reaction a ribonucleoside 5'-diphosphate + ATP = a ribonucleoside 5'-triphosphate + ADP. Functionally, major role in the synthesis of nucleoside triphosphates other than ATP. The ATP gamma phosphate is transferred to the NDP beta phosphate via a ping-pong mechanism, using a phosphorylated active-site intermediate. The protein is Nucleoside diphosphate kinase A1 of Xenopus laevis (African clawed frog).